The primary structure comprises 471 residues: Glutamate--tRNA ligase (471 aa).

The short motif at 9–19 (PSPTGYLHVGG) is the 'HIGH' region element. Positions 98, 100, 125, and 127 each coordinate Zn(2+). The short motif at 237-241 (KLSKR) is the 'KMSKS' region element. Lys-240 provides a ligand contact to ATP.

It belongs to the class-I aminoacyl-tRNA synthetase family. Glutamate--tRNA ligase type 1 subfamily. In terms of assembly, monomer. The cofactor is Zn(2+).

Its subcellular location is the cytoplasm. The catalysed reaction is tRNA(Glu) + L-glutamate + ATP = L-glutamyl-tRNA(Glu) + AMP + diphosphate. Functionally, catalyzes the attachment of glutamate to tRNA(Glu) in a two-step reaction: glutamate is first activated by ATP to form Glu-AMP and then transferred to the acceptor end of tRNA(Glu). This Salmonella gallinarum (strain 287/91 / NCTC 13346) protein is Glutamate--tRNA ligase.